We begin with the raw amino-acid sequence, 629 residues long: tRNA uridine 5-carboxymethylaminomethyl modification enzyme MnmG (629 aa).

Residues 14-19 (GAGHAG), Val-126, and Ser-181 contribute to the FAD site. Position 273-287 (273-287 (GPRYCPSIEDKVVRF)) interacts with NAD(+). Gln-370 provides a ligand contact to FAD.

It belongs to the MnmG family. As to quaternary structure, homodimer. Heterotetramer of two MnmE and two MnmG subunits. Requires FAD as cofactor.

The protein localises to the cytoplasm. Functionally, NAD-binding protein involved in the addition of a carboxymethylaminomethyl (cmnm) group at the wobble position (U34) of certain tRNAs, forming tRNA-cmnm(5)s(2)U34. In Bacillus cereus (strain ZK / E33L), this protein is tRNA uridine 5-carboxymethylaminomethyl modification enzyme MnmG.